The following is a 64-amino-acid chain: Antimicrobial peptide THP2 (64 aa).

Positions 1 to 28 (MRILYLLFSLLFLALQVSPGLSSPKRDM) are cleaved as a signal peptide. 3 disulfide bridges follow: C31-C57, C36-C51, and C41-C58.

In terms of tissue distribution, expressed in circulating heterophil granulocytes and bone marrow (at protein level).

The protein localises to the secreted. In terms of biological role, antibacterial activity against the Gram-positive bacterium Staphylococcus aureus. Lacks antibacterial activity against the Gram-negative bacterium E.coli K-12. The protein is Antimicrobial peptide THP2 of Meleagris gallopavo (Wild turkey).